Consider the following 414-residue polypeptide: Serine hydroxymethyltransferase (414 aa).

(6S)-5,6,7,8-tetrahydrofolate-binding positions include L117 and 121-123 (GHL). K226 is modified (N6-(pyridoxal phosphate)lysine). Residue 349 to 351 (SPF) participates in (6S)-5,6,7,8-tetrahydrofolate binding.

This sequence belongs to the SHMT family. Homodimer. It depends on pyridoxal 5'-phosphate as a cofactor.

The protein resides in the cytoplasm. It catalyses the reaction (6R)-5,10-methylene-5,6,7,8-tetrahydrofolate + glycine + H2O = (6S)-5,6,7,8-tetrahydrofolate + L-serine. The protein operates within one-carbon metabolism; tetrahydrofolate interconversion. It participates in amino-acid biosynthesis; glycine biosynthesis; glycine from L-serine: step 1/1. Its function is as follows. Catalyzes the reversible interconversion of serine and glycine with tetrahydrofolate (THF) serving as the one-carbon carrier. This reaction serves as the major source of one-carbon groups required for the biosynthesis of purines, thymidylate, methionine, and other important biomolecules. Also exhibits THF-independent aldolase activity toward beta-hydroxyamino acids, producing glycine and aldehydes, via a retro-aldol mechanism. The polypeptide is Serine hydroxymethyltransferase (Desulfovibrio desulfuricans (strain ATCC 27774 / DSM 6949 / MB)).